Reading from the N-terminus, the 274-residue chain is 4-hydroxy-tetrahydrodipicolinate reductase (274 aa).

7–12 (GVTGRM) is an NAD(+) binding site. Residue R40 coordinates NADP(+). NAD(+)-binding positions include 103-105 (GTT) and 127-130 (SANF). H160 serves as the catalytic Proton donor/acceptor. H161 serves as a coordination point for (S)-2,3,4,5-tetrahydrodipicolinate. Catalysis depends on K164, which acts as the Proton donor. 170–171 (GT) contributes to the (S)-2,3,4,5-tetrahydrodipicolinate binding site.

It belongs to the DapB family. As to quaternary structure, homotetramer.

The protein resides in the cytoplasm. The catalysed reaction is (S)-2,3,4,5-tetrahydrodipicolinate + NAD(+) + H2O = (2S,4S)-4-hydroxy-2,3,4,5-tetrahydrodipicolinate + NADH + H(+). It carries out the reaction (S)-2,3,4,5-tetrahydrodipicolinate + NADP(+) + H2O = (2S,4S)-4-hydroxy-2,3,4,5-tetrahydrodipicolinate + NADPH + H(+). It functions in the pathway amino-acid biosynthesis; L-lysine biosynthesis via DAP pathway; (S)-tetrahydrodipicolinate from L-aspartate: step 4/4. Catalyzes the conversion of 4-hydroxy-tetrahydrodipicolinate (HTPA) to tetrahydrodipicolinate. In Blochmanniella floridana, this protein is 4-hydroxy-tetrahydrodipicolinate reductase.